The sequence spans 383 residues: MHPQAVRPSETLKAFGDKLSMIGVTRITEITHLDRIGIPVFSAIRPTAEDGAVSIYAGKGATRTQARASAMMEAFERYSAERKPEDETFTAHPEDCDGLDPESLILPGSTDLKSELEWINAENLTGDEEVPVPANAVFHPYNPPEGCMSLFRSNTNGLASGNAREEAIFHGLMEVIERDAWSLFEARRGPKVEVDCSGTDNDIISGLLEKFHAAGVEVTLVDLTADTGVATVAAVADDTVLRDPALLTMGVGTHLDPEIAVIRALTEVAQSRATQIHGTREDTVRAEFMRRAGYERMKRLNRHWFSEPEDTITLDEMEDLSTRSFRGDLEITLRKLRESGLEDVFYVDLTRDVGVPVVRVIVPGLEVFSVDPERVGRRIRSSI.

One can recognise a YcaO domain in the interval 58 to 383 (GKGATRTQAR…RVGRRIRSSI (326 aa)). The tract at residues 80-100 (AERKPEDETFTAHPEDCDGLD) is disordered.

This is an uncharacterized protein from Methanothermobacter thermautotrophicus (strain ATCC 29096 / DSM 1053 / JCM 10044 / NBRC 100330 / Delta H) (Methanobacterium thermoautotrophicum).